Reading from the N-terminus, the 122-residue chain is Large ribosomal subunit protein uL14 (122 aa).

This sequence belongs to the universal ribosomal protein uL14 family. In terms of assembly, part of the 50S ribosomal subunit. Forms a cluster with proteins L3 and L19. In the 70S ribosome, L14 and L19 interact and together make contacts with the 16S rRNA in bridges B5 and B8.

Its function is as follows. Binds to 23S rRNA. Forms part of two intersubunit bridges in the 70S ribosome. The chain is Large ribosomal subunit protein uL14 from Mycolicibacterium vanbaalenii (strain DSM 7251 / JCM 13017 / BCRC 16820 / KCTC 9966 / NRRL B-24157 / PYR-1) (Mycobacterium vanbaalenii).